Reading from the N-terminus, the 481-residue chain is uncharacterized protein (481 aa).

This is an uncharacterized protein from Cryphonectria parasitica (Chestnut blight fungus).